The chain runs to 527 residues: Methane monooxygenase component A alpha chain (527 aa).

The Fe cation site is built by glutamate 114, glutamate 144, and histidine 147. Residue cysteine 151 is part of the active site. Positions 209, 243, and 246 each coordinate Fe cation.

It belongs to the TmoA/XamoA family. M.capsulatus has two forms of methane monooxygenase, a soluble and a membrane-bound type. The soluble type consists of four components (A to D): protein A, comprising three chains, in an alpha-2, beta-2, gamma-2 configuration, is a nonheme iron protein containing an unusual mu-hydroxo bridge structure at its active site and interacts with both oxygen and methane. The cofactor is Fe cation.

The catalysed reaction is methane + NADH + O2 + H(+) = methanol + NAD(+) + H2O. It catalyses the reaction methane + NADPH + O2 + H(+) = methanol + NADP(+) + H2O. In terms of biological role, responsible for the initial oxygenation of methane to methanol in methanotrophs. It also catalyzes the monohydroxylation of a variety of unactivated alkenes, alicyclic, aromatic and heterocyclic compounds. The sequence is that of Methane monooxygenase component A alpha chain (mmoX) from Methylococcus capsulatus (strain ATCC 33009 / NCIMB 11132 / Bath).